Consider the following 82-residue polypeptide: RNA-binding protein Hfq (82 aa).

A Sm domain is found at 11 to 71 (DTFLNSVRKS…ISTIMPAQPV (61 aa)).

The protein belongs to the Hfq family. As to quaternary structure, homohexamer.

RNA chaperone that binds small regulatory RNA (sRNAs) and mRNAs to facilitate mRNA translational regulation in response to envelope stress, environmental stress and changes in metabolite concentrations. Also binds with high specificity to tRNAs. The chain is RNA-binding protein Hfq from Caulobacter vibrioides (strain ATCC 19089 / CIP 103742 / CB 15) (Caulobacter crescentus).